The following is a 290-amino-acid chain: Shikimate dehydrogenase (NADP(+)) (290 aa).

Residues 24–26 (SLS) and Thr-71 contribute to the shikimate site. Catalysis depends on Lys-75, which acts as the Proton acceptor. The shikimate site is built by Asn-96 and Asp-111. Residues 136–140 (GAGGA), 160–165 (NRTVDR), and Leu-233 each bind NADP(+). Tyr-235 is a shikimate binding site. Position 256 (Gly-256) interacts with NADP(+).

It belongs to the shikimate dehydrogenase family. In terms of assembly, homodimer.

The enzyme catalyses shikimate + NADP(+) = 3-dehydroshikimate + NADPH + H(+). Its pathway is metabolic intermediate biosynthesis; chorismate biosynthesis; chorismate from D-erythrose 4-phosphate and phosphoenolpyruvate: step 4/7. Involved in the biosynthesis of the chorismate, which leads to the biosynthesis of aromatic amino acids. Catalyzes the reversible NADPH linked reduction of 3-dehydroshikimate (DHSA) to yield shikimate (SA). This Methanopyrus kandleri (strain AV19 / DSM 6324 / JCM 9639 / NBRC 100938) protein is Shikimate dehydrogenase (NADP(+)).